The chain runs to 471 residues: 5-hydroxytryptamine receptor 2A (471 aa).

The Extracellular portion of the chain corresponds to 1–80 (MDILCEENTS…LQEKNWSALL (80 aa)). N-linked (GlcNAc...) asparagine glycans are attached at residues asparagine 8, asparagine 38, asparagine 44, asparagine 51, and asparagine 54. The chain crosses the membrane as a helical span at residues 81-97 (TAVVIILTIAGNILVIM). Topologically, residues 98-111 (AVSLEKKLQNATNY) are cytoplasmic. The chain crosses the membrane as a helical span at residues 112–137 (FLMSLAIADMLLGFLVMPVSMLTILY). The Extracellular segment spans residues 138–146 (GYRWPLPSK). Residues 147 to 171 (LCAVWIYLDVLFSTASIMHLCAISL) form a helical membrane-spanning segment. Cysteine 148 and cysteine 227 are oxidised to a cystine. Aspartate 155 contacts serotonin. The short motif at 172–174 (DRY) is the DRY motif; important for ligand-induced conformation changes element. Residues 172–191 (DRYVAIQNPIHHSRFNSRTK) are Cytoplasmic-facing. A helical transmembrane segment spans residues 192–215 (AFLKIIAVWTISVGISMPIPVFGL). Over 216 to 232 (QDDSKVFKEGSCLLADD) the chain is Extracellular. Residues 233–258 (NFVLIGSFVSFFIPLTIMVITYFLTI) traverse the membrane as a helical segment. Residues 259-322 (KSLQKEATLC…QSISNEQKAC (64 aa)) lie on the Cytoplasmic side of the membrane. Serine 280 carries the post-translational modification Phosphoserine. A helical transmembrane segment spans residues 323-348 (KVLGIVFFLFVVMWCPFFITNIMAVI). Asparagine 343 serves as a coordination point for serotonin. Cysteines 349 and 353 form a disulfide. Topologically, residues 349–356 (CKESCNED) are extracellular. Residues 357–382 (VIGALLNVFVWIGYLSSAVNPLVYTL) traverse the membrane as a helical segment. The NPxxY motif; important for ligand-induced conformation changes and signaling signature appears at 376–380 (NPLVY). Residues 383–471 (FNKTYRSAFS…DGVNEKVSCV (89 aa)) are Cytoplasmic-facing. Positions 450–471 (KQHSEDASKDNSDGVNEKVSCV) are disordered. The segment covering 451–465 (QHSEDASKDNSDGVN) has biased composition (basic and acidic residues). A PDZ-binding motif is present at residues 469 to 471 (SCV).

The protein belongs to the G-protein coupled receptor 1 family. As to quaternary structure, interacts (via C-terminus) with MPDZ and PATJ. May interact (via C-terminus) with MPP3, PRDX6, DLG4, DLG1, CASK, APBA1 and MAGI2. Interacts with GRM2 and DRD2; this may affect signaling.

The protein localises to the cell membrane. The protein resides in the cell projection. It localises to the dendrite. Its subcellular location is the axon. It is found in the cytoplasmic vesicle. The protein localises to the membrane. The protein resides in the caveola. It localises to the presynapse. Its activity is regulated as follows. G-protein coupled receptor activity is regulated by lipids: oleamide increases HTR2A-mediated activity. G-protein coupled receptor for 5-hydroxytryptamine (serotonin). Also functions as a receptor for various drugs and psychoactive substances, including mescaline, psilocybin, 1-(2,5-dimethoxy-4-iodophenyl)-2-aminopropane (DOI) and lysergic acid diethylamide (LSD). Ligand binding causes a conformation change that triggers signaling via guanine nucleotide-binding proteins (G proteins) and modulates the activity of downstream effectors. HTR2A is coupled to G(q)/G(11) G alpha proteins and activates phospholipase C-beta, releasing diacylglycerol (DAG) and inositol 1,4,5-trisphosphate (IP3) second messengers that modulate the activity of phosphatidylinositol 3-kinase and promote the release of Ca(2+) ions from intracellular stores, respectively. Beta-arrestin family members inhibit signaling via G proteins and mediate activation of alternative signaling pathways. Affects neural activity, perception, cognition and mood. Plays a role in the regulation of behavior, including responses to anxiogenic situations and psychoactive substances. Plays a role in intestinal smooth muscle contraction, and may play a role in arterial vasoconstriction. This chain is 5-hydroxytryptamine receptor 2A (HTR2A), found in Macaca mulatta (Rhesus macaque).